Consider the following 347-residue polypeptide: Merozoite surface protein 2 (347 aa).

The first 20 residues, 1 to 20 (MKVIKTLSIINFFIFVTFNI), serve as a signal peptide directing secretion. 2 N-linked (GlcNAc...) asparagine glycosylation sites follow: N22 and N36. The tract at residues 44–273 (AESKPPTGDG…EQTESPELQS (230 aa)) is polymorphic region. Tandem repeats lie at residues 53-60 (GAVASAGN), 61-68 (GAVASAGN), 69-76 (GAVASAGN), 77-84 (GAVASAGN), 85-88 (GAGN), 89-92 (GAGN), 93-96 (GAGN), 97-100 (GAGN), 101-104 (GAGN), 105-108 (GAGN), 109-112 (GAGN), 113-116 (GAGN), 117-120 (GAGN), 121-124 (GAGN), 125-128 (GAGN), 129-132 (GAGN), 133-136 (GAGN), 137-140 (GAGN), 141-144 (GAGN), 145-152 (GAVASAGN), 153-156 (GAGN), and 157-164 (GAVASAGN). A 6 X 8 AA repeats of G-A-V-A-S-A-G-N region spans residues 53–164 (GAVASAGNGA…GNGAVASAGN (112 aa)). Residues 85–156 (GAGNGAGNGA…VASAGNGAGN (72 aa)) are 16 X 4 AA repeats of G-A-G-N. The span at 165–206 (GAVAERSSSTPATTTTTTTTNDAEASTSTSSENSNHNNAETN) shows a compositional bias: low complexity. Positions 165–308 (GAVAERSSST…DSQKECTDGN (144 aa)) are disordered. 2 stretches are compositionally biased toward polar residues: residues 213–240 (VQPNQANKETQNNSNVQQDSQTKSNVPR) and 247–275 (KSPTAQPEQAENSAPTAEQTESPELQSAP). Residue N224 is glycosylated (N-linked (GlcNAc...) asparagine). N-linked (GlcNAc...) asparagine glycosylation occurs at N296. C304 and C312 form a disulfide bridge. N-linked (GlcNAc...) asparagine glycans are attached at residues N320 and N321. The GPI-anchor amidated asparagine moiety is linked to residue N321. A propeptide spans 322 to 347 (SSNIASINKFVVLISATLVLSFAIFI) (removed in mature form).

It localises to the cell membrane. May play a role in the merozoite attachment to the erythrocyte. This chain is Merozoite surface protein 2, found in Plasmodium falciparum (isolate Nig32 / Nigeria).